A 296-amino-acid chain; its full sequence is Phosphoribosylaminoimidazole-succinocarboxamide synthase (296 aa).

This sequence belongs to the SAICAR synthetase family.

It catalyses the reaction 5-amino-1-(5-phospho-D-ribosyl)imidazole-4-carboxylate + L-aspartate + ATP = (2S)-2-[5-amino-1-(5-phospho-beta-D-ribosyl)imidazole-4-carboxamido]succinate + ADP + phosphate + 2 H(+). The protein operates within purine metabolism; IMP biosynthesis via de novo pathway; 5-amino-1-(5-phospho-D-ribosyl)imidazole-4-carboxamide from 5-amino-1-(5-phospho-D-ribosyl)imidazole-4-carboxylate: step 1/2. The chain is Phosphoribosylaminoimidazole-succinocarboxamide synthase from Geotalea uraniireducens (strain Rf4) (Geobacter uraniireducens).